A 411-amino-acid polypeptide reads, in one-letter code: Acetyl-coenzyme A carboxylase carboxyl transferase subunit beta, chloroplastic (411 aa).

The 271-residue stretch at 32 to 302 folds into the CoA carboxyltransferase N-terminal domain; it reads LWTRCDHCGV…KEQGRIPYGE (271 aa). Zn(2+) is bound by residues cysteine 36, cysteine 39, cysteine 55, and cysteine 58. The segment at 36–58 adopts a C4-type zinc-finger fold; the sequence is CDHCGVILYIKHLKENQRVCFGC.

Belongs to the AccD/PCCB family. In terms of assembly, acetyl-CoA carboxylase is a heterohexamer composed of biotin carboxyl carrier protein, biotin carboxylase and 2 subunits each of ACCase subunit alpha and ACCase plastid-coded subunit beta (accD). Zn(2+) is required as a cofactor.

The protein resides in the plastid. The protein localises to the chloroplast stroma. It carries out the reaction N(6)-carboxybiotinyl-L-lysyl-[protein] + acetyl-CoA = N(6)-biotinyl-L-lysyl-[protein] + malonyl-CoA. Its pathway is lipid metabolism; malonyl-CoA biosynthesis; malonyl-CoA from acetyl-CoA: step 1/1. Functionally, component of the acetyl coenzyme A carboxylase (ACC) complex. Biotin carboxylase (BC) catalyzes the carboxylation of biotin on its carrier protein (BCCP) and then the CO(2) group is transferred by the transcarboxylase to acetyl-CoA to form malonyl-CoA. This is Acetyl-coenzyme A carboxylase carboxyl transferase subunit beta, chloroplastic from Chlorella vulgaris (Green alga).